The sequence spans 275 residues: Dermonecrotic toxin SpaSicTox-betaIIA1 (275 aa).

The active site involves His5. 2 residues coordinate Mg(2+): Glu25 and Asp27. Catalysis depends on His41, which acts as the Nucleophile. 2 disulfides stabilise this stretch: Cys45–Cys51 and Cys47–Cys190. Position 85 (Asp85) interacts with Mg(2+).

It belongs to the arthropod phospholipase D family. Class II subfamily. Mg(2+) serves as cofactor. In terms of tissue distribution, expressed by the venom gland.

It is found in the secreted. It catalyses the reaction an N-(acyl)-sphingosylphosphocholine = an N-(acyl)-sphingosyl-1,3-cyclic phosphate + choline. It carries out the reaction an N-(acyl)-sphingosylphosphoethanolamine = an N-(acyl)-sphingosyl-1,3-cyclic phosphate + ethanolamine. The catalysed reaction is a 1-acyl-sn-glycero-3-phosphocholine = a 1-acyl-sn-glycero-2,3-cyclic phosphate + choline. The enzyme catalyses a 1-acyl-sn-glycero-3-phosphoethanolamine = a 1-acyl-sn-glycero-2,3-cyclic phosphate + ethanolamine. Functionally, dermonecrotic toxins cleave the phosphodiester linkage between the phosphate and headgroup of certain phospholipids (sphingolipid and lysolipid substrates), forming an alcohol (often choline) and a cyclic phosphate. This toxin acts on sphingomyelin (SM). It may also act on ceramide phosphoethanolamine (CPE), lysophosphatidylcholine (LPC) and lysophosphatidylethanolamine (LPE), but not on lysophosphatidylserine (LPS), and lysophosphatidylglycerol (LPG). It acts by transphosphatidylation, releasing exclusively cyclic phosphate products as second products. Induces dermonecrosis, hemolysis, increased vascular permeability, edema, inflammatory response, and platelet aggregation. This is Dermonecrotic toxin SpaSicTox-betaIIA1 from Sicarius patagonicus (Six-eyed sand spider).